A 440-amino-acid chain; its full sequence is Probable aldose 1-epimerase ARB_05372 (440 aa).

The signal sequence occupies residues 1–24 (MCGVLRQLMLLLLAFLSITPSCSA). 5 N-linked (GlcNAc...) asparagine glycosylation sites follow: Asn32, Asn38, Asn43, Asn68, and Asn112. 125–126 (NR) lines the substrate pocket. Residues Asn129, Asn147, Asn163, Asn171, and Asn199 are each glycosylated (N-linked (GlcNAc...) asparagine). Catalysis depends on His233, which acts as the Proton donor. 4 N-linked (GlcNAc...) asparagine glycosylation sites follow: Asn243, Asn275, Asn281, and Asn306. Asp311 is a substrate binding site. N-linked (GlcNAc...) asparagine glycans are attached at residues Asn321, Asn337, Asn365, and Asn385. Glu401 (proton acceptor) is an active-site residue.

The protein belongs to the aldose epimerase family. In terms of assembly, monomer.

Its subcellular location is the secreted. It catalyses the reaction alpha-D-glucose = beta-D-glucose. Its pathway is carbohydrate metabolism; hexose metabolism. In terms of biological role, mutarotase converts alpha-aldose to the beta-anomer. It is active on D-glucose, L-arabinose, D-xylose, D-galactose, maltose and lactose. In Arthroderma benhamiae (strain ATCC MYA-4681 / CBS 112371) (Trichophyton mentagrophytes), this protein is Probable aldose 1-epimerase ARB_05372.